We begin with the raw amino-acid sequence, 384 residues long: MLWSIMSKPLDLNQLAQNIKQWGLELGFQQVGITDTDLRASEPALQAWLDKQYHGEMAWMARHGMMRARPHELLPGTLRVISVRMNYLPANAAFASTLKDPTLGYVSRYALGRDYHKLLRSRLKKLGEQIQQYCGSLNFRPFVDSAPILERPLAEKAGLGWTGKHSLILNREAGSFFFLGELLIDLPLPVDQPVEEGCGKCVACMTICPTGAIVEPYTVDARRCISYLTIELEGAIPEAFRPLIGNRIYGCDDCQLICPWNRYSQLTDEADFSPRKALHNPDLLELFSWSEAQFLKVTEGSAIRRIGHLRWLRNVAVALGNAPWSNAVITALESRKGEHPLLDEHIEWAIAQQIEKRNACIIEVQLPKKQRLVRVIEKGLVRDA.

Aspartate 144 serves as the catalytic Proton donor. Positions 186 to 218 (LPLPVDQPVEEGCGKCVACMTICPTGAIVEPYT) constitute a 4Fe-4S ferredoxin-type domain. Cysteine 198, cysteine 201, cysteine 204, cysteine 208, cysteine 224, cysteine 251, cysteine 254, and cysteine 258 together coordinate [4Fe-4S] cluster.

It belongs to the QueG family. Monomer. Requires cob(II)alamin as cofactor. [4Fe-4S] cluster is required as a cofactor.

Its subcellular location is the cytoplasm. It carries out the reaction epoxyqueuosine(34) in tRNA + AH2 = queuosine(34) in tRNA + A + H2O. Its pathway is tRNA modification; tRNA-queuosine biosynthesis. Catalyzes the conversion of epoxyqueuosine (oQ) to queuosine (Q), which is a hypermodified base found in the wobble positions of tRNA(Asp), tRNA(Asn), tRNA(His) and tRNA(Tyr). The sequence is that of Epoxyqueuosine reductase from Salmonella typhimurium (strain LT2 / SGSC1412 / ATCC 700720).